Consider the following 326-residue polypeptide: Negative regulator of the PHO system (326 aa).

The 283-residue stretch at 8-290 (FQQLEKLGEG…ARQALQHPWF (283 aa)) folds into the Protein kinase domain. Residues 14–22 (LGEGTYATV) and Lys-37 contribute to the ATP site. Catalysis depends on Asp-131, which acts as the Proton acceptor. The interval 300-326 (PQHLSDPYQQQQQQQQHPHQPIIDQQY) is disordered. The span at 305-326 (DPYQQQQQQQQHPHQPIIDQQY) shows a compositional bias: low complexity.

Belongs to the protein kinase superfamily. CMGC Ser/Thr protein kinase family. CDC2/CDKX subfamily. As to quaternary structure, interacts with a number of cyclins.

The catalysed reaction is L-seryl-[protein] + ATP = O-phospho-L-seryl-[protein] + ADP + H(+). It catalyses the reaction L-threonyl-[protein] + ATP = O-phospho-L-threonyl-[protein] + ADP + H(+). Its function is as follows. When phosphate concentrations are high it phosphorylates the PHO4 transcription factor thus establishing repression. The sequence is that of Negative regulator of the PHO system (PHO85) from Candida albicans (Yeast).